A 314-amino-acid chain; its full sequence is Thioredoxin reductase aclD (314 aa).

FAD is bound by residues 13-16 (GGPA), 35-40 (DSKSYR), His-47, and Ala-112. Cys-136 and Cys-139 are disulfide-bonded. Residues Asp-281 and 288 to 289 (AA) contribute to the FAD site.

It belongs to the class-II pyridine nucleotide-disulfide oxidoreductase family. As to quaternary structure, homodimer. It depends on FAD as a cofactor.

The protein operates within mycotoxin biosynthesis. In terms of biological role, thioredoxin reductase; part of the gene cluster that mediates the biosynthesis of aspirochlorine (or antibiotic A30641), an unusual halogenated spiro compound with distinctive antifungal properties due to selective inhibition of protein biosynthesis, and which is also active against bacteria, viruses, and murine tumor cells. The non-ribosomal peptide synthetase (NRPS) aclP is responsible the formation of the diketopiperazine (DKP) core from the condensation of 2 phenylalanine residues. One Phe residue is tailored into chlorotyrosine by hydroxylation and chlorination, whereas the second Phe undergoes an unprecedented C-C bond cleavage to be converted into glycine. After formation of the DKP, sulfur is incorporated into the DKP by conjugation with glutathione by aclG, followed by its stepwise degradation to the thiol by aclI, aclJ and aclK, and the dithiol oxidation by aclT. In addition, oxygenases (aclB, aclC, aclL and aclO) and O-methyltransferases (aclM and aclU) act as tailoring enzymes to produce the intermediate dechloroaspirochlorine. Ultimately, chlorination of dechloroaspirochlorine by the halogenase aclH is the last step in the aspirochlorine pathway. The polypeptide is Thioredoxin reductase aclD (Aspergillus oryzae (strain ATCC 42149 / RIB 40) (Yellow koji mold)).